A 310-amino-acid polypeptide reads, in one-letter code: Dehydrodolichyl diphosphate synthase 2 (310 aa).

It belongs to the UPP synthase family. Requires Mg(2+) as cofactor.

The protein operates within protein modification; protein glycosylation. Functionally, catalyzes cis-prenyl chain elongation to produce the polyprenyl backbone of dolichol, a glycosyl carrier-lipid required for the biosynthesis of several classes of glycoprotein. In Arabidopsis thaliana (Mouse-ear cress), this protein is Dehydrodolichyl diphosphate synthase 2.